Reading from the N-terminus, the 137-residue chain is Large ribosomal subunit protein uL16c (137 aa).

The protein belongs to the universal ribosomal protein uL16 family. As to quaternary structure, part of the 50S ribosomal subunit.

It is found in the plastid. The polypeptide is Large ribosomal subunit protein uL16c (Cuscuta reflexa (Southern Asian dodder)).